The sequence spans 304 residues: UDP-N-acetylenolpyruvoylglucosamine reductase (304 aa).

The 165-residue stretch at 34-198 folds into the FAD-binding PCMH-type domain; sequence IGGKADFLVW…LEVVFALQPG (165 aa). Residue R177 is part of the active site. S227 functions as the Proton donor in the catalytic mechanism. E297 is a catalytic residue.

Belongs to the MurB family. Requires FAD as cofactor.

It localises to the cytoplasm. It catalyses the reaction UDP-N-acetyl-alpha-D-muramate + NADP(+) = UDP-N-acetyl-3-O-(1-carboxyvinyl)-alpha-D-glucosamine + NADPH + H(+). It participates in cell wall biogenesis; peptidoglycan biosynthesis. Functionally, cell wall formation. The sequence is that of UDP-N-acetylenolpyruvoylglucosamine reductase from Geobacillus thermodenitrificans (strain NG80-2).